The following is a 243-amino-acid chain: Adenosylcobinamide-GDP ribazoletransferase (243 aa).

The next 5 membrane-spanning stretches (helical) occupy residues 31–51 (LLWYPAVGLLLGLLLWLAHLL), 61–81 (AAIILALWVGLSGGLHLDGLA), 109–129 (IAVVVLVLLLLLKFAALLSLL), 134–154 (GIYLVLLPWLGRSLLPLLLAT), and 188–208 (LLLGWGALIALATALALFVWL).

The protein belongs to the CobS family. Requires Mg(2+) as cofactor.

It localises to the cell inner membrane. It catalyses the reaction alpha-ribazole + adenosylcob(III)inamide-GDP = adenosylcob(III)alamin + GMP + H(+). The enzyme catalyses alpha-ribazole 5'-phosphate + adenosylcob(III)inamide-GDP = adenosylcob(III)alamin 5'-phosphate + GMP + H(+). Its pathway is cofactor biosynthesis; adenosylcobalamin biosynthesis; adenosylcobalamin from cob(II)yrinate a,c-diamide: step 7/7. Functionally, joins adenosylcobinamide-GDP and alpha-ribazole to generate adenosylcobalamin (Ado-cobalamin). Also synthesizes adenosylcobalamin 5'-phosphate from adenosylcobinamide-GDP and alpha-ribazole 5'-phosphate. This Ectopseudomonas mendocina (strain ymp) (Pseudomonas mendocina) protein is Adenosylcobinamide-GDP ribazoletransferase.